The following is a 159-amino-acid chain: MTDQQNTEAAEAQGPQFSLQRIYVRDLSFEAPKSPAIFRQEWTPSVALDLNTRQKALEGDFHEVVLTLSVTVKNGEEVAFIAEVQQAGIFLIQGLDEASMSHTLGAFCPNILFPYARETLDSLVTRGSFPALMLAPVNFDALYAQELQRMQQEGSSTVQ.

It belongs to the SecB family. As to quaternary structure, homotetramer, a dimer of dimers. One homotetramer interacts with 1 SecA dimer.

The protein localises to the cytoplasm. Functionally, one of the proteins required for the normal export of preproteins out of the cell cytoplasm. It is a molecular chaperone that binds to a subset of precursor proteins, maintaining them in a translocation-competent state. It also specifically binds to its receptor SecA. This chain is Protein-export protein SecB, found in Pseudomonas fluorescens (strain SBW25).